The chain runs to 275 residues: Large ribosomal subunit protein uL2c (275 aa).

Positions 219 to 254 (TVRGSVMNPCDHPHGGGEGRAPIGRTRPLTPWGKPA) are disordered.

Belongs to the universal ribosomal protein uL2 family. In terms of assembly, part of the 50S ribosomal subunit.

It localises to the plastid. The protein resides in the chloroplast. In Phaeodactylum tricornutum (strain CCAP 1055/1), this protein is Large ribosomal subunit protein uL2c (rpl2).